The sequence spans 83 residues: Cell division topological specificity factor (83 aa).

Belongs to the MinE family.

Functionally, prevents the cell division inhibition by proteins MinC and MinD at internal division sites while permitting inhibition at polar sites. This ensures cell division at the proper site by restricting the formation of a division septum at the midpoint of the long axis of the cell. In Pseudoalteromonas atlantica (strain T6c / ATCC BAA-1087), this protein is Cell division topological specificity factor.